The following is a 149-amino-acid chain: Transcriptional repressor NrdR (149 aa).

The segment at Cys3–Cys34 is a zinc-finger region. The ATP-cone domain occupies Ile49–Thr139.

The protein belongs to the NrdR family. Requires Zn(2+) as cofactor.

In terms of biological role, negatively regulates transcription of bacterial ribonucleotide reductase nrd genes and operons by binding to NrdR-boxes. This is Transcriptional repressor NrdR from Clostridium perfringens (strain SM101 / Type A).